Consider the following 103-residue polypeptide: Large ribosomal subunit protein bL21 (103 aa).

This sequence belongs to the bacterial ribosomal protein bL21 family. As to quaternary structure, part of the 50S ribosomal subunit. Contacts protein L20.

Its function is as follows. This protein binds to 23S rRNA in the presence of protein L20. This chain is Large ribosomal subunit protein bL21, found in Shewanella baltica (strain OS223).